The primary structure comprises 135 residues: Ribonuclease P protein component (135 aa).

Belongs to the RnpA family. Consists of a catalytic RNA component (M1 or rnpB) and a protein subunit.

It catalyses the reaction Endonucleolytic cleavage of RNA, removing 5'-extranucleotides from tRNA precursor.. Functionally, RNaseP catalyzes the removal of the 5'-leader sequence from pre-tRNA to produce the mature 5'-terminus. It can also cleave other RNA substrates such as 4.5S RNA. The protein component plays an auxiliary but essential role in vivo by binding to the 5'-leader sequence and broadening the substrate specificity of the ribozyme. The chain is Ribonuclease P protein component from Pseudomonas aeruginosa (strain ATCC 15692 / DSM 22644 / CIP 104116 / JCM 14847 / LMG 12228 / 1C / PRS 101 / PAO1).